We begin with the raw amino-acid sequence, 388 residues long: Processive diacylglycerol beta-glucosyltransferase (388 aa).

This sequence belongs to the glycosyltransferase 28 family. UgtP subfamily.

Its subcellular location is the cell membrane. The catalysed reaction is a 1,2-diacyl-3-O-(beta-D-glucopyranosyl)-sn-glycerol + UDP-alpha-D-glucose = a 1,2-diacyl-3-O-(beta-D-Glc-(1-&gt;6)-beta-D-Glc)-sn-glycerol + UDP + H(+). It carries out the reaction a 1,2-diacyl-3-O-(beta-D-Glc-(1-&gt;6)-beta-D-Glc)-sn-glycerol + UDP-alpha-D-glucose = a 1,2-diacyl-3-O-(beta-D-Glc-(1-&gt;6)-beta-D-Glc-(1-&gt;6)-beta-D-Glc)-sn-glycerol + UDP + H(+). It catalyses the reaction a 1,2-diacyl-sn-glycerol + UDP-alpha-D-glucose = a 1,2-diacyl-3-O-(beta-D-glucopyranosyl)-sn-glycerol + UDP + H(+). Its pathway is glycolipid metabolism; diglucosyl-diacylglycerol biosynthesis. Its function is as follows. Processive glucosyltransferase involved in the biosynthesis of both the bilayer- and non-bilayer-forming membrane glucolipids. Is able to successively transfer up to three glucosyl residues to diacylglycerol (DAG), thereby catalyzing the formation of beta-monoglucosyl-DAG (3-O-(beta-D-glucopyranosyl)-1,2-diacyl-sn-glycerol), beta-diglucosyl-DAG (3-O-(beta-D-glucopyranosyl-beta-(1-&gt;6)-D-glucopyranosyl)-1,2-diacyl-sn-glycerol) and beta-triglucosyl-DAG (3-O-(beta-D-glucopyranosyl-beta-(1-&gt;6)-D-glucopyranosyl-beta-(1-&gt;6)-D-glucopyranosyl)-1,2-diacyl-sn-glycerol). Beta-diglucosyl-DAG is the predominant glycolipid found in Bacillales and is also used as a membrane anchor for lipoteichoic acid (LTA). The sequence is that of Processive diacylglycerol beta-glucosyltransferase from Bacillus cereus (strain B4264).